A 340-amino-acid polypeptide reads, in one-letter code: Adenosine receptor A2b (340 aa).

At 1–6 (MNTMKT) the chain is on the extracellular side. Residues 7 to 31 (TYIVLELIIAVLSIAGNVLVCWAVA) form a helical membrane-spanning segment. Over 32–41 (INSTLKNATN) the chain is Cytoplasmic. The helical transmembrane segment at 42–65 (YFLVSLAVADIAVGLLAIPFAITI) threads the bilayer. Topologically, residues 66 to 76 (SIGFQVDFHSC) are extracellular. C76 and C171 are joined by a disulfide. A helical membrane pass occupies residues 77–99 (LFFACFVLVLTQSSIFSLLAVAI). Residues 100-119 (DRYLAIKIPLRYNSLVTGKR) are Cytoplasmic-facing. A helical membrane pass occupies residues 120–142 (ARGLIAVLWLLSFVIGLTPLMGW). The Extracellular portion of the chain corresponds to 143-178 (NKAMSGCPNSTNETGADHGAGHHGCFISCLFENVVT). N151 and N154 each carry an N-linked (GlcNAc...) asparagine glycan. E174 contributes to the adenosine binding site. Residues 179–203 (MSYMVYFNFFGCVLLPLIIMLGIYI) form a helical membrane-spanning segment. Topologically, residues 204 to 235 (KIFMVACKQLHQIELMGNSRTTLQKEVHAAKS) are cytoplasmic. The helical transmembrane segment at 236–259 (LAIIVGLFAFCWLPLHILNCITHF) threads the bilayer. Residue N254 participates in adenosine binding. Residues 260 to 267 (HEEFSKSK) are Extracellular-facing. Residues 268-291 (PEWVMYVAIILSHANSVINPIIYA) form a helical membrane-spanning segment. Positions 279 and 280 each coordinate adenosine. Residues 292–340 (YRIRDFRYTFHKIISKILCKTDDFPKCTTDNNQHLTVTNVNAPAASVTI) lie on the Cytoplasmic side of the membrane. C310 carries S-palmitoyl cysteine lipidation.

Belongs to the G-protein coupled receptor 1 family.

It localises to the cell membrane. In terms of biological role, receptor for adenosine. The activity of this receptor is mediated by G proteins which activate adenylyl cyclase. The polypeptide is Adenosine receptor A2b (ADORA2B) (Gallus gallus (Chicken)).